Here is a 314-residue protein sequence, read N- to C-terminus: tRNA-cytidine(32) 2-sulfurtransferase (314 aa).

The PP-loop motif motif lies at 39-44 (SGGKDS). [4Fe-4S] cluster-binding residues include Cys114, Cys117, and Cys205.

The protein belongs to the TtcA family. As to quaternary structure, homodimer. Requires Mg(2+) as cofactor. It depends on [4Fe-4S] cluster as a cofactor.

It is found in the cytoplasm. It carries out the reaction cytidine(32) in tRNA + S-sulfanyl-L-cysteinyl-[cysteine desulfurase] + AH2 + ATP = 2-thiocytidine(32) in tRNA + L-cysteinyl-[cysteine desulfurase] + A + AMP + diphosphate + H(+). It functions in the pathway tRNA modification. In terms of biological role, catalyzes the ATP-dependent 2-thiolation of cytidine in position 32 of tRNA, to form 2-thiocytidine (s(2)C32). The sulfur atoms are provided by the cysteine/cysteine desulfurase (IscS) system. This is tRNA-cytidine(32) 2-sulfurtransferase from Cupriavidus metallidurans (strain ATCC 43123 / DSM 2839 / NBRC 102507 / CH34) (Ralstonia metallidurans).